A 356-amino-acid polypeptide reads, in one-letter code: UDP-N-acetylglucosamine--N-acetylmuramyl-(pentapeptide) pyrophosphoryl-undecaprenol N-acetylglucosamine transferase (356 aa).

UDP-N-acetyl-alpha-D-glucosamine-binding positions include 12 to 14, Asn124, Arg163, Ser188, Ile242, 261 to 266, and Gln287; these read TGG and ALTVSE.

This sequence belongs to the glycosyltransferase 28 family. MurG subfamily.

It localises to the cell inner membrane. The catalysed reaction is di-trans,octa-cis-undecaprenyl diphospho-N-acetyl-alpha-D-muramoyl-L-alanyl-D-glutamyl-meso-2,6-diaminopimeloyl-D-alanyl-D-alanine + UDP-N-acetyl-alpha-D-glucosamine = di-trans,octa-cis-undecaprenyl diphospho-[N-acetyl-alpha-D-glucosaminyl-(1-&gt;4)]-N-acetyl-alpha-D-muramoyl-L-alanyl-D-glutamyl-meso-2,6-diaminopimeloyl-D-alanyl-D-alanine + UDP + H(+). It participates in cell wall biogenesis; peptidoglycan biosynthesis. Its function is as follows. Cell wall formation. Catalyzes the transfer of a GlcNAc subunit on undecaprenyl-pyrophosphoryl-MurNAc-pentapeptide (lipid intermediate I) to form undecaprenyl-pyrophosphoryl-MurNAc-(pentapeptide)GlcNAc (lipid intermediate II). The chain is UDP-N-acetylglucosamine--N-acetylmuramyl-(pentapeptide) pyrophosphoryl-undecaprenol N-acetylglucosamine transferase from Pseudomonas fluorescens (strain SBW25).